The sequence spans 248 residues: MLYLHDVWVNWFEGEENGYNVCHFYEWRKDDTIELLDQVPLLKVDATLYHYIEDELLELPQKLLEDVHHKAYIRKNHERLQQEYCFVVTDGKGIIAIDTIGYNVPIRKSRLIPRQEQMVYEMVENVQAEKYEFQVEETEKEHHILSPSPFIMNGLTRKERQLKQLLFMALDQLHTTKNTAEIRYWYTEWDPSAYGTVQHMEFEDIWARLYDEAESGWSEKHEQLCERLVKGQPFFEKLWEMENEQKVN.

This sequence belongs to the UPF0736 family.

The polypeptide is UPF0736 protein BCG9842_B4111 (Bacillus cereus (strain G9842)).